The primary structure comprises 197 residues: Holliday junction branch migration complex subunit RuvA (197 aa).

A domain I region spans residues 1–64 (MYEYIKGTYM…EDFIGLYGFG (64 aa)). The tract at residues 65–143 (SKEELELFNK…VNLDEGIQTD (79 aa)) is domain II. A flexible linker region spans residues 144 to 149 (SNDIKV). A domain III region spans residues 149 to 197 (VSSKILEEAKEALMSLGYSEKECEKALKNVEEKESLEIIIKESLKFLMN).

Belongs to the RuvA family. Homotetramer. Forms an RuvA(8)-RuvB(12)-Holliday junction (HJ) complex. HJ DNA is sandwiched between 2 RuvA tetramers; dsDNA enters through RuvA and exits via RuvB. An RuvB hexamer assembles on each DNA strand where it exits the tetramer. Each RuvB hexamer is contacted by two RuvA subunits (via domain III) on 2 adjacent RuvB subunits; this complex drives branch migration. In the full resolvosome a probable DNA-RuvA(4)-RuvB(12)-RuvC(2) complex forms which resolves the HJ.

Its subcellular location is the cytoplasm. The RuvA-RuvB-RuvC complex processes Holliday junction (HJ) DNA during genetic recombination and DNA repair, while the RuvA-RuvB complex plays an important role in the rescue of blocked DNA replication forks via replication fork reversal (RFR). RuvA specifically binds to HJ cruciform DNA, conferring on it an open structure. The RuvB hexamer acts as an ATP-dependent pump, pulling dsDNA into and through the RuvAB complex. HJ branch migration allows RuvC to scan DNA until it finds its consensus sequence, where it cleaves and resolves the cruciform DNA. This Hathewaya histolytica (Clostridium histolyticum) protein is Holliday junction branch migration complex subunit RuvA.